We begin with the raw amino-acid sequence, 266 residues long: Hydroxyethylthiazole kinase (266 aa).

Residue methionine 44 coordinates substrate. Lysine 120 and threonine 166 together coordinate ATP. Residue glycine 193 participates in substrate binding.

The protein belongs to the Thz kinase family. Mg(2+) is required as a cofactor.

It carries out the reaction 5-(2-hydroxyethyl)-4-methylthiazole + ATP = 4-methyl-5-(2-phosphooxyethyl)-thiazole + ADP + H(+). Its pathway is cofactor biosynthesis; thiamine diphosphate biosynthesis; 4-methyl-5-(2-phosphoethyl)-thiazole from 5-(2-hydroxyethyl)-4-methylthiazole: step 1/1. In terms of biological role, catalyzes the phosphorylation of the hydroxyl group of 4-methyl-5-beta-hydroxyethylthiazole (THZ). In Syntrophomonas wolfei subsp. wolfei (strain DSM 2245B / Goettingen), this protein is Hydroxyethylthiazole kinase.